The chain runs to 332 residues: Ketol-acid reductoisomerase (NAD(+)) (332 aa).

Positions Met1–Thr181 constitute a KARI N-terminal Rossmann domain. Residues Tyr24–Gln27, Ser50, and Asp82–Gln85 contribute to the NAD(+) site. Residue His107 is part of the active site. Gly133 provides a ligand contact to NAD(+). Residues Thr182–Leu327 enclose the KARI C-terminal knotted domain. Residues Asp190, Glu194, Glu226, and Glu230 each coordinate Mg(2+). Residue Ser251 participates in substrate binding.

It belongs to the ketol-acid reductoisomerase family. Mg(2+) is required as a cofactor.

It carries out the reaction (2R)-2,3-dihydroxy-3-methylbutanoate + NAD(+) = (2S)-2-acetolactate + NADH + H(+). Its pathway is amino-acid biosynthesis; L-isoleucine biosynthesis; L-isoleucine from 2-oxobutanoate: step 2/4. The protein operates within amino-acid biosynthesis; L-valine biosynthesis; L-valine from pyruvate: step 2/4. Its function is as follows. Involved in the biosynthesis of branched-chain amino acids (BCAA). Catalyzes an alkyl-migration followed by a ketol-acid reduction of (S)-2-acetolactate (S2AL) to yield (R)-2,3-dihydroxy-isovalerate. In the isomerase reaction, S2AL is rearranged via a Mg-dependent methyl migration to produce 3-hydroxy-3-methyl-2-ketobutyrate (HMKB). In the reductase reaction, this 2-ketoacid undergoes a metal-dependent reduction by NADH to yield (R)-2,3-dihydroxy-isovalerate. The chain is Ketol-acid reductoisomerase (NAD(+)) from Thermacetogenium phaeum (strain ATCC BAA-254 / DSM 26808 / PB).